Here is a 764-residue protein sequence, read N- to C-terminus: MRPPPLLHLALLLALPRSLGGKGCPSPPCECHQEDDFRVTCKDIHRIPTLPPSTQTLKFIETQLKTIPSRAFSNLPNISRIYLSIDATLQRLESHSFYNLSKMTHIEIRNTRSLTSIDPDALKELPLLKFLGIFNTGLGVFPDVTKVYSTDVFFILEITDNPYMASIPANAFQGLCNETLTLKLYNNGFTSIQGHAFNGTKLDAVYLNKNKYLSAIDKDAFGGVYSGPTLLDVSYTSVTALPSKGLEHLKELIARNTWTLKKLPLSLSFLHLTRADLSYPSHCCAFKNQKKIRGILESLMCNESSIRSLRQRKSVNTLNGPFDQEYEEYLGDSHAGYKDNSQFQDTDSNSHYYVFFEEQEDEILGFGQELKNPQEETLQAFDSHYDYTVCGGNEDMVCTPKSDEFNPCEDIMGYKFLRIVVWFVSLLALLGNVFVLIVLLTSHYKLTVPRFLMCNLAFADFCMGMYLLLIASVDLYTHSEYYNHAIDWQTGPGCNTAGFFTVFASELSVYTLTVITLERWYAITFAMRLDRKIRLRHAYAIMVGGWVCCFLLALLPLVGISSYAKVSICLPMDTETPLALAYIILVLLLNIVAFIIVCSCYVKIYITVRNPQYNPGDKDTKIAKRMAVLIFTDFMCMAPISFYALSALMNKPLITVTNSKILLVLFYPLNSCANPFLYAIFTKAFQRDVFILLSKFGICKRQAQAYRGQRVSPKNSAGIQIQKVTRDMRQSLPNMQDEYELLENSHLTPNKQGQISKEYNQTVL.

Positions 1-20 (MRPPPLLHLALLLALPRSLG) are cleaved as a signal peptide. The Extracellular portion of the chain corresponds to 21-413 (GKGCPSPPCE…EFNPCEDIMG (393 aa)). C31 and C41 are joined by a disulfide. 2 N-linked (GlcNAc...) asparagine glycosylation sites follow: N77 and N99. 6 LRR repeats span residues 125–149 (LPLL…KVYS), 150–174 (TDVF…AFQG), 176–199 (CNET…AFNG), 201–223 (KLDA…AFGG), 225–248 (YSGP…GLEH), and 250–271 (KELI…SFLH). 2 N-linked (GlcNAc...) asparagine glycosylation sites follow: N177 and N198. Residue N302 is glycosylated (N-linked (GlcNAc...) asparagine). Y385 bears the Sulfotyrosine mark. A helical membrane pass occupies residues 414 to 441 (YKFLRIVVWFVSLLALLGNVFVLIVLLT). The Cytoplasmic segment spans residues 442 to 450 (SHYKLTVPR). The chain crosses the membrane as a helical span at residues 451–473 (FLMCNLAFADFCMGMYLLLIASV). The Extracellular portion of the chain corresponds to 474–494 (DLYTHSEYYNHAIDWQTGPGC). The cysteines at positions 494 and 569 are disulfide-linked. The helical transmembrane segment at 495-517 (NTAGFFTVFASELSVYTLTVITL) threads the bilayer. Residues 518–537 (ERWYAITFAMRLDRKIRLRH) are Cytoplasmic-facing. A helical membrane pass occupies residues 538–560 (AYAIMVGGWVCCFLLALLPLVGI). Over 561–580 (SSYAKVSICLPMDTETPLAL) the chain is Extracellular. Residues 581–602 (AYIILVLLLNIVAFIIVCSCYV) form a helical membrane-spanning segment. The Cytoplasmic portion of the chain corresponds to 603–625 (KIYITVRNPQYNPGDKDTKIAKR). Residues 626–649 (MAVLIFTDFMCMAPISFYALSALM) form a helical membrane-spanning segment. At 650–660 (NKPLITVTNSK) the chain is on the extracellular side. Residues 661-682 (ILLVLFYPLNSCANPFLYAIFT) form a helical membrane-spanning segment. Residues 683 to 764 (KAFQRDVFIL…ISKEYNQTVL (82 aa)) lie on the Cytoplasmic side of the membrane. The PDZ-binding motif lies at 762–764 (TVL).

The protein belongs to the G-protein coupled receptor 1 family. FSH/LSH/TSH subfamily. Interacts with heterodimer GPHA2:GPHB5; this interaction stimulates cAMP production. Interacts (via the PDZ-binding motif) with SCRIB; regulates TSHR trafficking and function. Post-translationally, glycosylated. In terms of processing, sulfated. Sulfation on Tyr-385 plays a role in thyrotropin receptor binding and activation.

Its subcellular location is the cell membrane. The protein localises to the basolateral cell membrane. Receptor for the thyroid-stimulating hormone (TSH) or thyrotropin. Also acts as a receptor for the heterodimeric glycoprotein hormone (GPHA2:GPHB5) or thyrostimulin. The activity of this receptor is mediated by G proteins which activate adenylate cyclase. Plays a central role in controlling thyroid cell metabolism. The sequence is that of Thyrotropin receptor (TSHR) from Canis lupus familiaris (Dog).